Reading from the N-terminus, the 309-residue chain is Zinc transporter ZIPB (309 aa).

The Periplasmic portion of the chain corresponds to 1–22; sequence MNQPSSLAADLRGAWHAQAQSH. The helical transmembrane segment at 23 to 50 threads the bilayer; it reads PLITLGLAASAAGVVLLLVAGIVNALTG. At 51–55 the chain is on the extracellular side; the sequence is ENRVH. A helical transmembrane segment spans residues 56-81; it reads VGYAVLGGAAGFAATALGALMALGLR. At 82 to 83 the chain is on the periplasmic side; that stretch reads AI. The helical transmembrane segment at 84 to 119 threads the bilayer; that stretch reads SARTQDAMLGFAAGMMLAASAFSLILPGLDAAGTIV. Zn(2+) is bound at residue Asp89. Met99 provides a ligand contact to Cd(2+). The Extracellular portion of the chain corresponds to 120–121; the sequence is GP. Residues 122–145 form a helical membrane-spanning segment; the sequence is GPAAAAVVALGLGLGVLLMLGLDY. Residue Asp144 participates in Zn(2+) binding. Cd(2+) is bound at residue Asp144. The Periplasmic portion of the chain corresponds to 146–165; that stretch reads FTPHEHERTGHQGPEAARVN. A helical transmembrane segment spans residues 166-190; it reads RVWLFVLTIILHNLPEGMAIGVSFA. Zn(2+) is bound at residue His177. Cd(2+)-binding residues include His177, Asn178, and Glu181. A Zn(2+)-binding site is contributed by Glu181. Topologically, residues 191-192 are extracellular; sequence TG. Residues 193–222 traverse the membrane as a helical segment; that stretch reads DLRIGLPLTSAIAIQDVPEGLAVALALRAV. Gln207 is a binding site for Zn(2+). Cd(2+)-binding residues include Gln207, Asp208, and Glu211. Glu211 serves as a coordination point for Zn(2+). The Periplasmic portion of the chain corresponds to 223–224; the sequence is GL. The chain crosses the membrane as a helical span at residues 225 to 251; the sequence is PIGRAVLVAVASGLMEPLGALVGVGIS. Residue Glu240 participates in Cd(2+) binding. The Extracellular portion of the chain corresponds to 252 to 255; that stretch reads SGFA. The chain crosses the membrane as a helical span at residues 256–275; sequence LAYPISMGLAAGAMIFVVSH. Residues His275, Glu276, and His286 each coordinate Zn(2+). His275 provides a ligand contact to Cd(2+). Over 276–287 the chain is Periplasmic; it reads EVIPETHRNGHE. The helical transmembrane segment at 288–308 threads the bilayer; sequence TTATVGLMAGFALMMFLDTAL. Residue Gly309 is a topological domain, extracellular.

The protein belongs to the ZIP transporter (TC 2.A.5) family. Homodimer. Also exists as a monomer.

The protein localises to the cell inner membrane. The enzyme catalyses Zn(2+)(in) = Zn(2+)(out). It catalyses the reaction Cd(2+)(in) = Cd(2+)(out). Its function is as follows. Selective electrodiffusional channel that mediates the uptake of Zn(2+). Exploits in vivo zinc concentration gradients (maintained by cellular zinc homeostasis) to passively move zinc ions into the cytoplasm. ZIPB-mediated zinc flux is dependent upon pH, but independent of the proton motive force. Is also able to import Cd(2+), but is not permeable to Co(2+), Cu(2+), Fe(2+), Mn(2+) and Ni(2+). The polypeptide is Zinc transporter ZIPB (Bordetella bronchiseptica (strain ATCC BAA-588 / NCTC 13252 / RB50) (Alcaligenes bronchisepticus)).